We begin with the raw amino-acid sequence, 135 residues long: Large ribosomal subunit protein uL22 (135 aa).

Residues 112 to 135 (KKPEKKKLKAKSAKTEEAPKAAEV) form a disordered region. The segment covering 124–135 (AKTEEAPKAAEV) has biased composition (basic and acidic residues).

The protein belongs to the universal ribosomal protein uL22 family. As to quaternary structure, part of the 50S ribosomal subunit.

In terms of biological role, this protein binds specifically to 23S rRNA; its binding is stimulated by other ribosomal proteins, e.g. L4, L17, and L20. It is important during the early stages of 50S assembly. It makes multiple contacts with different domains of the 23S rRNA in the assembled 50S subunit and ribosome. Its function is as follows. The globular domain of the protein is located near the polypeptide exit tunnel on the outside of the subunit, while an extended beta-hairpin is found that lines the wall of the exit tunnel in the center of the 70S ribosome. This Brachyspira hyodysenteriae (strain ATCC 49526 / WA1) protein is Large ribosomal subunit protein uL22.